Consider the following 449-residue polypeptide: Adenylyltransferase and sulfurtransferase MOCS3 (449 aa).

ATP is bound by residues Gly96, Asp117, 124-128 (SNLHR), Lys141, and 185-186 (DN). Cys227 and Cys230 together coordinate Zn(2+). Catalysis depends on Cys244, which acts as the Glycyl thioester intermediate; for adenylyltransferase activity. Cys302 and Cys305 together coordinate Zn(2+). The Rhodanese domain maps to 351–447 (QDKPHLLLDV…WTNQIDENFP (97 aa)). Residue Cys406 is the Cysteine persulfide intermediate; for sulfurtransferase activity of the active site.

This sequence in the N-terminal section; belongs to the HesA/MoeB/ThiF family. UBA4 subfamily. It depends on Zn(2+) as a cofactor.

It is found in the cytoplasm. Its subcellular location is the cytosol. The enzyme catalyses [molybdopterin-synthase sulfur-carrier protein]-C-terminal Gly-Gly + ATP + H(+) = [molybdopterin-synthase sulfur-carrier protein]-C-terminal Gly-Gly-AMP + diphosphate. The catalysed reaction is [molybdopterin-synthase sulfur-carrier protein]-C-terminal Gly-Gly-AMP + S-sulfanyl-L-cysteinyl-[cysteine desulfurase] + AH2 = [molybdopterin-synthase sulfur-carrier protein]-C-terminal-Gly-aminoethanethioate + L-cysteinyl-[cysteine desulfurase] + A + AMP + 2 H(+). The protein operates within tRNA modification; 5-methoxycarbonylmethyl-2-thiouridine-tRNA biosynthesis. It participates in cofactor biosynthesis; molybdopterin biosynthesis. Functionally, plays a central role in 2-thiolation of mcm(5)S(2)U at tRNA wobble positions of cytosolic tRNA(Lys), tRNA(Glu) and tRNA(Gln). Also essential during biosynthesis of the molybdenum cofactor. Acts by mediating the C-terminal thiocarboxylation of sulfur carriers URM1 and MOCS2A. Its N-terminus first activates URM1 and MOCS2A as acyl-adenylates (-COAMP), then the persulfide sulfur on the catalytic cysteine is transferred to URM1 and MOCS2A to form thiocarboxylation (-COSH) of their C-terminus. The reaction probably involves hydrogen sulfide that is generated from the persulfide intermediate and that acts as a nucleophile towards URM1 and MOCS2A. Subsequently, a transient disulfide bond is formed. Does not use thiosulfate as sulfur donor; NFS1 probably acting as a sulfur donor for thiocarboxylation reactions. The chain is Adenylyltransferase and sulfurtransferase MOCS3 from Drosophila grimshawi (Hawaiian fruit fly).